The sequence spans 371 residues: uncharacterized protein (371 aa).

It belongs to the Gfo/Idh/MocA family.

This is an uncharacterized protein from Synechocystis sp. (strain ATCC 27184 / PCC 6803 / Kazusa).